The sequence spans 310 residues: Malate dehydrogenase (310 aa).

Residues 7-12 (GAGNVG) and aspartate 32 each bind NAD(+). 2 residues coordinate substrate: arginine 81 and arginine 87. NAD(+) contacts are provided by residues asparagine 94 and 117–119 (VSN). Residues asparagine 119 and arginine 150 each coordinate substrate. The active-site Proton acceptor is histidine 174.

This sequence belongs to the LDH/MDH superfamily. MDH type 3 family.

It catalyses the reaction (S)-malate + NAD(+) = oxaloacetate + NADH + H(+). In terms of biological role, catalyzes the reversible oxidation of malate to oxaloacetate. This is Malate dehydrogenase from Chlorobium chlorochromatii (strain CaD3).